The chain runs to 168 residues: Phosphopantetheine adenylyltransferase (168 aa).

T10 contacts substrate. ATP-binding positions include 10–11 (TF) and H18. K42, L74, and R88 together coordinate substrate. Residues 89–91 (GLR), E99, and 124–130 (NSFISST) each bind ATP.

This sequence belongs to the bacterial CoaD family. As to quaternary structure, homohexamer. Requires Mg(2+) as cofactor.

The protein localises to the cytoplasm. It catalyses the reaction (R)-4'-phosphopantetheine + ATP + H(+) = 3'-dephospho-CoA + diphosphate. It functions in the pathway cofactor biosynthesis; coenzyme A biosynthesis; CoA from (R)-pantothenate: step 4/5. Its function is as follows. Reversibly transfers an adenylyl group from ATP to 4'-phosphopantetheine, yielding dephospho-CoA (dPCoA) and pyrophosphate. This chain is Phosphopantetheine adenylyltransferase, found in Shewanella denitrificans (strain OS217 / ATCC BAA-1090 / DSM 15013).